The sequence spans 222 residues: Transmembrane reductase CYB561D2 (222 aa).

The Cytoplasmic segment spans residues alanine 2–threonine 17. The Cytochrome b561 domain maps to alanine 14–arginine 217. Residues alanine 18 to alanine 38 traverse the membrane as a helical segment. The Lumenal portion of the chain corresponds to arginine 39–serine 46. A helical membrane pass occupies residues tryptophan 47 to phenylalanine 67. Histidine 48 provides a ligand contact to heme b. The Cytoplasmic portion of the chain corresponds to serine 68–cysteine 85. Heme b contacts are provided by histidine 86 and histidine 120. The helical transmembrane segment at histidine 86–leucine 106 threads the bilayer. At histidine 107–glutamine 122 the chain is on the lumenal side. A helical membrane pass occupies residues alanine 123 to tyrosine 143. Topologically, residues proline 144–serine 162 are cytoplasmic. Residue histidine 159 participates in heme b binding. A helical transmembrane segment spans residues glycine 163–phenylalanine 183. Topologically, residues threonine 184 to threonine 186 are lumenal. Residues valine 187 to methionine 207 traverse the membrane as a helical segment. Topologically, residues asparagine 208–proline 222 are cytoplasmic.

The cofactor is heme b. As to expression, highly expressed in the brain, lung, liver, and kidney. Moderately expressed in the heart, placenta, skeletal muscle, and pancreas.

It is found in the endoplasmic reticulum membrane. It localises to the cytoplasmic vesicle membrane. It catalyses the reaction monodehydro-L-ascorbate radical(out) + L-ascorbate(in) = monodehydro-L-ascorbate radical(in) + L-ascorbate(out). The catalysed reaction is Fe(3+)(out) + L-ascorbate(in) = monodehydro-L-ascorbate radical(in) + Fe(2+)(out) + H(+). Functionally, transmembrane reductase that may use ascorbate as an electron donor in the cytoplasm and transfer electrons across endoplasmic reticulum membranes to reduce monodehydro-L-ascorbate radical and iron cations Fe(3+) in the lumen of that compartment. This chain is Transmembrane reductase CYB561D2, found in Mus musculus (Mouse).